The primary structure comprises 381 residues: Alkanesulfonate monooxygenase (381 aa).

It belongs to the SsuD family. Homotetramer.

The enzyme catalyses an alkanesulfonate + FMNH2 + O2 = an aldehyde + FMN + sulfite + H2O + 2 H(+). Functionally, catalyzes the desulfonation of aliphatic sulfonates. The sequence is that of Alkanesulfonate monooxygenase from Escherichia fergusonii (strain ATCC 35469 / DSM 13698 / CCUG 18766 / IAM 14443 / JCM 21226 / LMG 7866 / NBRC 102419 / NCTC 12128 / CDC 0568-73).